The following is a 157-amino-acid chain: Transcriptional repressor NrdR (157 aa).

The tract at residues Met-1–Asn-21 is disordered. The segment at Cys-3 to Cys-34 is a zinc-finger region. The region spanning Leu-49–Ala-139 is the ATP-cone domain.

This sequence belongs to the NrdR family. Requires Zn(2+) as cofactor.

Its function is as follows. Negatively regulates transcription of bacterial ribonucleotide reductase nrd genes and operons by binding to NrdR-boxes. This is Transcriptional repressor NrdR from Ligilactobacillus salivarius (strain UCC118) (Lactobacillus salivarius).